The chain runs to 355 residues: Serum paraoxonase/arylesterase 1 (355 aa).

Cys-42 and Cys-353 form a disulfide bridge. Residues Glu-53 and Asp-54 each coordinate Ca(2+). The active-site Proton acceptor is His-115. Residues Ile-117, Asn-168, Asp-169, and Asn-224 each contribute to the Ca(2+) site. Asn-253 is a glycosylation site (N-linked (GlcNAc...) asparagine). Positions 269 and 270 each coordinate Ca(2+). 2 N-linked (GlcNAc...) asparagine glycosylation sites follow: Asn-270 and Asn-324.

It belongs to the paraoxonase family. In terms of assembly, homodimer. Interacts with CLU. It depends on Ca(2+) as a cofactor. Post-translationally, the signal sequence is not cleaved. Plasma, liver, kidney, heart, brain, small intestine and lung. In the plasma, associated with HDL.

The protein localises to the secreted. It localises to the extracellular space. The enzyme catalyses a phenyl acetate + H2O = a phenol + acetate + H(+). It carries out the reaction An aryl dialkyl phosphate + H2O = dialkyl phosphate + an aryl alcohol.. It catalyses the reaction an N-acyl-L-homoserine lactone + H2O = an N-acyl-L-homoserine + H(+). Functionally, hydrolyzes the toxic metabolites of a variety of organophosphorus insecticides. Capable of hydrolyzing a broad spectrum of organophosphate substrates and lactones, and a number of aromatic carboxylic acid esters. Mediates an enzymatic protection of low density lipoproteins against oxidative modification. This chain is Serum paraoxonase/arylesterase 1 (Pon1), found in Mus musculus (Mouse).